The primary structure comprises 401 residues: MALVSQARSLGKYFLLFDNLLVVLGFFVVFPLISIRFVDQLGWAALVVGLALGLRQLVQQGLGIFGGAIADRFGAKPMIVTGMLMRAAGFALMAMADEPWILWLACALSGLGGTLFDPPRTALVIKLTRPHERGRFYSLLMMQDSAGAVIGALIGSWLLQYDFHFVCWTGAAIFVLAAGWNAWLLPAYRISTVRAPMKEGLMRVLRDRRFVTYVLTLTGYYMLAVQVMLMLPIVVNELAGSPAAVKWMYAIEAALSLTLLYPLARWSEKRFSLEQRLMAGLLIMTLSLFPIGMITHLQTLFMFICFFYMGSILAEPARETLGASLADSRARGSYMGFSRLGLALGGALGYTGGGWMYDTGKTLDMPELPWFLLGIIGLITLAGLYWQFNRRRIESAMLSSS.

The next 11 helical transmembrane spans lie at 13–33 (YFLLFDNLLVVLGFFVVFPLI), 34–54 (SIRFVDQLGWAALVVGLALGL), 99–116 (PWILWLACALSGLGGTLF), 139–159 (LLMMQDSAGAVIGALIGSWLL), 165–185 (FVCWTGAAIFVLAAGWNAWLL), 214–234 (VLTLTGYYMLAVQVMLMLPIV), 243–263 (AAVKWMYAIEAALSLTLLYPL), 277–297 (LMAGLLIMTLSLFPIGMITHL), 299–319 (TLFMFICFFYMGSILAEPARE), 340–360 (LGLALGGALGYTGGGWMYDTG), and 368–388 (LPWFLLGIIGLITLAGLYWQF).

Belongs to the major facilitator superfamily. DHA1 family. MdtH (TC 2.A.1.2.21) subfamily.

The protein localises to the cell inner membrane. This is Multidrug resistance protein MdtH from Yersinia pseudotuberculosis serotype O:1b (strain IP 31758).